An 88-amino-acid polypeptide reads, in one-letter code: Cell division topological specificity factor (88 aa).

It belongs to the MinE family.

Functionally, prevents the cell division inhibition by proteins MinC and MinD at internal division sites while permitting inhibition at polar sites. This ensures cell division at the proper site by restricting the formation of a division septum at the midpoint of the long axis of the cell. In Escherichia fergusonii (strain ATCC 35469 / DSM 13698 / CCUG 18766 / IAM 14443 / JCM 21226 / LMG 7866 / NBRC 102419 / NCTC 12128 / CDC 0568-73), this protein is Cell division topological specificity factor.